A 620-amino-acid chain; its full sequence is Chaperone protein HscA homolog (620 aa).

This sequence belongs to the heat shock protein 70 family.

In terms of biological role, chaperone involved in the maturation of iron-sulfur cluster-containing proteins. Has a low intrinsic ATPase activity which is markedly stimulated by HscB. This is Chaperone protein HscA homolog from Pseudomonas savastanoi pv. phaseolicola (strain 1448A / Race 6) (Pseudomonas syringae pv. phaseolicola (strain 1448A / Race 6)).